The chain runs to 95 residues: Aspartyl/glutamyl-tRNA(Asn/Gln) amidotransferase subunit C (95 aa).

This sequence belongs to the GatC family. Heterotrimer of A, B and C subunits.

It catalyses the reaction L-glutamyl-tRNA(Gln) + L-glutamine + ATP + H2O = L-glutaminyl-tRNA(Gln) + L-glutamate + ADP + phosphate + H(+). It carries out the reaction L-aspartyl-tRNA(Asn) + L-glutamine + ATP + H2O = L-asparaginyl-tRNA(Asn) + L-glutamate + ADP + phosphate + 2 H(+). Functionally, allows the formation of correctly charged Asn-tRNA(Asn) or Gln-tRNA(Gln) through the transamidation of misacylated Asp-tRNA(Asn) or Glu-tRNA(Gln) in organisms which lack either or both of asparaginyl-tRNA or glutaminyl-tRNA synthetases. The reaction takes place in the presence of glutamine and ATP through an activated phospho-Asp-tRNA(Asn) or phospho-Glu-tRNA(Gln). The chain is Aspartyl/glutamyl-tRNA(Asn/Gln) amidotransferase subunit C from Methylobacterium radiotolerans (strain ATCC 27329 / DSM 1819 / JCM 2831 / NBRC 15690 / NCIMB 10815 / 0-1).